Reading from the N-terminus, the 118-residue chain is DNA-binding protein SSO0352 (118 aa).

This sequence belongs to the PDCD5 family.

This Saccharolobus solfataricus (strain ATCC 35092 / DSM 1617 / JCM 11322 / P2) (Sulfolobus solfataricus) protein is DNA-binding protein SSO0352.